Reading from the N-terminus, the 514-residue chain is MEISWGRAMWRNFLGQSPDWYKLALLVFLIVNPFIFLANPFIAGWLLVAEFIFTLAMALKCYPLLPGGLLAIEAVIIGMTSAAHVREEVAANLEVLLLLMFMVAGIYFMKQLLLFIFTRLLLSIRSKMVLSLAFCVAAAFLSAFLDALTVVAVVISVAVGFYGIYHRVASSRGEENDMLDDSHIDPHYKTVLEQFRGFLRSLMMHAGVGTALGGVMTMVGEPQNLIIAKAAGWHFGDFFLRMSPVTVPVLVCGLLTCMLVEKMRWFGYGETLPEKVRDVLQQFDDQSRKKRTRQDKIKLIVQAVIGVWLVTALALHLAEVGLIGLSVIILATALTGVTDEHAIGKAFTESLPFTALLTVFFSIVAVIIDQHLFAPIIQFVLQASEHAQLTLFYLFNGLLSSISDNVFVGTIYINEAKAAMENGAISLKQFELLAVAINTGTNLPSVATPNGQAAFLFLLTSALAPLIRLSYGRMVWMALPYTIVLTLIGLLCVEFTLAPATEWMTQAGWLATLS.

12 consecutive transmembrane segments (helical) span residues 23-43, 63-83, 97-117, 120-140, 144-164, 202-222, 238-258, 303-323, 357-377, 391-411, 447-467, and 475-495; these read LALLVFLIVNPFIFLANPFIA, PLLPGGLLAIEAVIIGMTSAA, LLLMFMVAGIYFMKQLLLFIF, LLLSIRSKMVLSLAFCVAAAF, FLDALTVVAVVISVAVGFYGI, LMMHAGVGTALGGVMTMVGEP, FFLRMSPVTVPVLVCGLLTCM, AVIGVWLVTALALHLAEVGLI, LTVFFSIVAVIIDQHLFAPII, LFYLFNGLLSSISDNVFVGTI, ATPNGQAAFLFLLTSALAPLI, and VWMALPYTIVLTLIGLLCVEF.

The protein belongs to the NhaB Na(+)/H(+) (TC 2.A.34) antiporter family.

The protein resides in the cell inner membrane. It carries out the reaction 2 Na(+)(in) + 3 H(+)(out) = 2 Na(+)(out) + 3 H(+)(in). In terms of biological role, na(+)/H(+) antiporter that extrudes sodium in exchange for external protons. In Salmonella choleraesuis (strain SC-B67), this protein is Na(+)/H(+) antiporter NhaB.